The primary structure comprises 83 residues: Molybdopterin synthase sulfur carrier subunit (83 aa).

The protein belongs to the MoaD family.

It functions in the pathway cofactor biosynthesis; molybdopterin biosynthesis. Involved in sulfur transfer in the conversion of molybdopterin precursor Z to molybdopterin. Probably plays a role in host phagosome maturation arrest. This is Molybdopterin synthase sulfur carrier subunit (moaD1) from Mycobacterium tuberculosis (strain ATCC 25618 / H37Rv).